Reading from the N-terminus, the 98-residue chain is NADH-ubiquinone oxidoreductase chain 4L (98 aa).

3 helical membrane-spanning segments follow: residues 1 to 21, 29 to 49, and 58 to 78; these read MPIIYMNIMLAFTISLLGMLT, SLLCLEGMMLSLFIMSTLMAL, and IVPIALLVFAACEAAVGLSLL.

It belongs to the complex I subunit 4L family. In terms of assembly, core subunit of respiratory chain NADH dehydrogenase (Complex I) which is composed of 45 different subunits.

It is found in the mitochondrion inner membrane. It carries out the reaction a ubiquinone + NADH + 5 H(+)(in) = a ubiquinol + NAD(+) + 4 H(+)(out). In terms of biological role, core subunit of the mitochondrial membrane respiratory chain NADH dehydrogenase (Complex I) which catalyzes electron transfer from NADH through the respiratory chain, using ubiquinone as an electron acceptor. Part of the enzyme membrane arm which is embedded in the lipid bilayer and involved in proton translocation. In Presbytis melalophos (Mitred leaf monkey), this protein is NADH-ubiquinone oxidoreductase chain 4L (MT-ND4L).